A 222-amino-acid polypeptide reads, in one-letter code: N-(5'-phosphoribosyl)anthranilate isomerase (222 aa).

The protein belongs to the TrpF family.

It carries out the reaction N-(5-phospho-beta-D-ribosyl)anthranilate = 1-(2-carboxyphenylamino)-1-deoxy-D-ribulose 5-phosphate. Its pathway is amino-acid biosynthesis; L-tryptophan biosynthesis; L-tryptophan from chorismate: step 3/5. The protein is N-(5'-phosphoribosyl)anthranilate isomerase of Symbiobacterium thermophilum (strain DSM 24528 / JCM 14929 / IAM 14863 / T).